A 535-amino-acid chain; its full sequence is Suppressor of cytokine signaling 6 (535 aa).

The span at 80–89 shows a compositional bias: basic residues; it reads RLSAKQKSKG. The tract at residues 80–105 is disordered; that stretch reads RLSAKQKSKGKAGTPSGSSADEDTFS. The 108-residue stretch at 384–491 folds into the SH2 domain; it reads WYWGPITRWE…TYPVRLTNPV (108 aa). The 50-residue stretch at 486-535 folds into the SOCS box domain; the sequence is RLTNPVSRFMQVRSLQYLCRFVIRQYTRIDLIQKLPLPNKMKDYLQEKHY.

Interacts with RBCK1. Interacts with phosphorylated IRS4. Interacts with KIT (phosphorylated). Interacts with PIM3.

It participates in protein modification; protein ubiquitination. Its function is as follows. SOCS family proteins form part of a classical negative feedback system that regulates cytokine signal transduction. May be a substrate recognition component of a SCF-like ECS (Elongin BC-CUL2/5-SOCS-box protein) E3 ubiquitin-protein ligase complex which mediates the ubiquitination and subsequent proteasomal degradation of target proteins. Regulates KIT degradation by ubiquitination of the tyrosine-phosphorylated receptor. The polypeptide is Suppressor of cytokine signaling 6 (SOCS6) (Pongo abelii (Sumatran orangutan)).